A 309-amino-acid polypeptide reads, in one-letter code: UDP-N-acetylenolpyruvoylglucosamine reductase (309 aa).

Residues Arg-34–Gly-198 enclose the FAD-binding PCMH-type domain. Residue Arg-178 is part of the active site. The active-site Proton donor is Ser-227. The active site involves Glu-297.

This sequence belongs to the MurB family. Requires FAD as cofactor.

The protein resides in the cytoplasm. It catalyses the reaction UDP-N-acetyl-alpha-D-muramate + NADP(+) = UDP-N-acetyl-3-O-(1-carboxyvinyl)-alpha-D-glucosamine + NADPH + H(+). Its pathway is cell wall biogenesis; peptidoglycan biosynthesis. Its function is as follows. Cell wall formation. This is UDP-N-acetylenolpyruvoylglucosamine reductase from Acidiphilium cryptum (strain JF-5).